The primary structure comprises 187 residues: Mitochondrial intermembrane space import and assembly protein 40 (187 aa).

Residues 1–24 constitute a mitochondrion transit peptide; it reads MFRPASRALLRAPAVARGPASRRL. Over 25–43 the chain is Mitochondrial matrix; it reads ISTAPAESKPRSWKNTAVR. A helical; Signal-anchor for type II membrane protein transmembrane segment spans residues 44–61; that stretch reads LGLAAGAIYYYNTSNVFA. Residues 62–187 lie on the Mitochondrial intermembrane side of the membrane; that stretch reads ENPSFSLNNQ…MDCIEKFKCV (126 aa). Positions 73 to 115 are disordered; that stretch reads KKNSAEEPLPTLDSIKPRIREERESAAPKPNAEQAPAQELPFG. The span at 87–98 shows a compositional bias: basic and acidic residues; it reads IKPRIREERESA. Intrachain disulfides connect C146–C148 and C167–C180. One can recognise a CHCH domain in the interval 154–187; that stretch reads HGPCGEEFKAAFSCFVYSEEEPKGMDCIEKFKCV. A Cx9C motif motif is present at residues 157–167; the sequence is CGEEFKAAFSC.

As to quaternary structure, monomer. The cofactor is Cu(2+). Requires Zn(2+) as cofactor.

Its subcellular location is the mitochondrion inner membrane. In terms of biological role, required for the import and folding of small cysteine-containing proteins (small Tim) in the mitochondrial intermembrane space (IMS). Forms a redox cycle with ERV1 that involves a disulfide relay system. Precursor proteins to be imported into the IMS are translocated in their reduced form into the mitochondria. The oxidized form of MIA40 forms a transient intermolecular disulfide bridge with the reduced precursor protein, resulting in oxidation of the precursor protein that now contains an intramolecular disulfide bond and is able to undergo folding in the IMS. The sequence is that of Mitochondrial intermembrane space import and assembly protein 40 (mia40) from Aspergillus oryzae (strain ATCC 42149 / RIB 40) (Yellow koji mold).